The following is a 531-amino-acid chain: UDP-glucuronosyltransferase 1A7 (531 aa).

An N-terminal signal peptide occupies residues 1–25; that stretch reads MAPADVPASLPLGLCLLLASGFGHA. 3 N-linked (GlcNAc...) asparagine glycosylation sites follow: Asn-71, Asn-293, and Asn-431. The chain crosses the membrane as a helical span at residues 487-503; it reads LDVIGFLLAIVLTVVFI.

The protein belongs to the UDP-glycosyltransferase family. As to quaternary structure, homodimer. Homooligomer. Interacts with UGT1A1, UGT1A3, UGT1A4, UGT1A6, UGT1A8, UGT1A9 and UGT1A10 to form heterodimers.

The protein localises to the endoplasmic reticulum membrane. It catalyses the reaction glucuronate acceptor + UDP-alpha-D-glucuronate = acceptor beta-D-glucuronoside + UDP + H(+). It carries out the reaction 17alpha-estradiol + UDP-alpha-D-glucuronate = 17alpha-estradiol 3-O-(beta-D-glucuronate) + UDP + H(+). The enzyme catalyses prunetin + UDP-alpha-D-glucuronate = prunetin-5-O-beta-D-glucuronide + UDP. The catalysed reaction is 5-epi-5-F2t-IsoP + UDP-alpha-D-glucuronate = 5-epi-5-F2t-IsoP-glucuronide + UDP + H(+). It catalyses the reaction (E)-ferulate + UDP-alpha-D-glucuronate = (E)-ferulic acid beta-D-glucuronate ester + UDP. It carries out the reaction candesartan + UDP-alpha-D-glucuronate = candesartan O-beta-D-glucuronoside + UDP. The enzyme catalyses SN-38 + UDP-alpha-D-glucuronate = SN-38 O-beta-D-glucuronide + UDP + H(+). The catalysed reaction is mycophenolate + UDP-alpha-D-glucuronate = mycophenolate 7-O-beta-D-glucuronide + UDP + H(+). In terms of biological role, UDP-glucuronosyltransferase (UGT) that catalyzes phase II biotransformation reactions in which lipophilic substrates are conjugated with glucuronic acid to increase the metabolite's water solubility, thereby facilitating excretion into either the urine or bile. Essential for the elimination and detoxification of drugs, xenobiotics and endogenous compounds. Catalyzes the glucuronidation of endogenous estrogen hormone epiestradiol. Involved in the glucuronidation of F2-isoprostane (5-epi-5-F2t-IsoP). Involved in the glucuronidation of the phytochemical ferulic acid at the carboxylic acid group. Also catalyzes the glucuronidation of the isoflavones genistein, daidzein, glycitein, formononetin, biochanin A and prunetin, which are phytoestrogens with anticancer and cardiovascular properties. Involved in the glucuronidation of the AGTR1 angiotensin receptor antagonist caderastan, a drug which can inhibit the effect of angiotensin II. Involved in the biotransformation of 7-ethyl-10-hydroxycamptothecin (SN-38), the pharmacologically active metabolite of the anticancer drug irinotecan. Also metabolizes mycophenolate, an immunosuppressive agent. The chain is UDP-glucuronosyltransferase 1A7 from Rattus norvegicus (Rat).